We begin with the raw amino-acid sequence, 203 residues long: dCTP deaminase (203 aa).

DCTP-binding positions include 105–110 (RSSLGR), Asp123, 131–133 (TLE), Gln152, Tyr166, Lys173, and Gln177. Glu133 serves as the catalytic Proton donor/acceptor. Positions 164–203 (RPYGVERGSKYQDQDGPQASRIGSDPEFHSDENQAAEHES) are disordered. Over residues 166–176 (YGVERGSKYQD) the composition is skewed to basic and acidic residues. Positions 187–203 (SDPEFHSDENQAAEHES) are enriched in basic and acidic residues.

This sequence belongs to the dCTP deaminase family. Homotrimer.

The catalysed reaction is dCTP + H2O + H(+) = dUTP + NH4(+). It functions in the pathway pyrimidine metabolism; dUMP biosynthesis; dUMP from dCTP (dUTP route): step 1/2. Functionally, catalyzes the deamination of dCTP to dUTP. This chain is dCTP deaminase, found in Halorubrum lacusprofundi (strain ATCC 49239 / DSM 5036 / JCM 8891 / ACAM 34).